The chain runs to 208 residues: Probable GTP-binding protein EngB (208 aa).

Residues 23 to 205 (LTSEMVILGR…RQTLLKYLLT (183 aa)) enclose the EngB-type G domain. GTP-binding positions include 31–38 (GRSNVGKS), 57–61 (GKTRL), 84–87 (DLPG), 154–157 (TKFD), and 182–184 (FNA). 2 residues coordinate Mg(2+): Ser38 and Thr59.

Belongs to the TRAFAC class TrmE-Era-EngA-EngB-Septin-like GTPase superfamily. EngB GTPase family. Mg(2+) is required as a cofactor.

Functionally, necessary for normal cell division and for the maintenance of normal septation. The chain is Probable GTP-binding protein EngB from Helicobacter pylori (strain Shi470).